A 241-amino-acid chain; its full sequence is Orotidine 5'-phosphate decarboxylase (241 aa).

Substrate contacts are provided by residues aspartate 16, lysine 37, 64 to 73 (DLKFHDIPTT), threonine 128, arginine 190, glutamine 199, glycine 219, and arginine 220. Residue lysine 66 is the Proton donor of the active site.

This sequence belongs to the OMP decarboxylase family. Type 1 subfamily. Homodimer.

It catalyses the reaction orotidine 5'-phosphate + H(+) = UMP + CO2. Its pathway is pyrimidine metabolism; UMP biosynthesis via de novo pathway; UMP from orotate: step 2/2. Its function is as follows. Catalyzes the decarboxylation of orotidine 5'-monophosphate (OMP) to uridine 5'-monophosphate (UMP). The chain is Orotidine 5'-phosphate decarboxylase from Prochlorococcus marinus (strain NATL1A).